Consider the following 336-residue polypeptide: Monoacylglycerol lipase ABHD6 (336 aa).

At 1 to 8 (MDLDVVNM) the chain is on the extracellular side. A helical; Signal-anchor for type II membrane protein transmembrane segment spans residues 9–29 (FVIAGGTLAIPILAFVASFLL). Residues 30-336 (WPSALIRIYY…VHNTDNKKLN (307 aa)) lie on the Cytoplasmic side of the membrane. Ser148 (nucleophile) is an active-site residue. Active-site charge relay system residues include Asp278 and His306.

Belongs to the AB hydrolase superfamily. In terms of tissue distribution, widely expressed with higher expression in small intestine, liver and brown adipose tissue. In brain, expressed postsynaptically in cortical neurons but not detected in microglia (at protein level).

The protein resides in the late endosome membrane. Its subcellular location is the lysosome membrane. The protein localises to the mitochondrion membrane. It catalyses the reaction Hydrolyzes glycerol monoesters of long-chain fatty acids.. The catalysed reaction is 2-(5Z,8Z,11Z,14Z-eicosatetraenoyl)-glycerol + H2O = glycerol + (5Z,8Z,11Z,14Z)-eicosatetraenoate + H(+). The enzyme catalyses 1-octanoylglycerol + H2O = octanoate + glycerol + H(+). It carries out the reaction 1-decanoylglycerol + H2O = decanoate + glycerol + H(+). It catalyses the reaction 1-dodecanoylglycerol + H2O = dodecanoate + glycerol + H(+). The catalysed reaction is 1-tetradecanoylglycerol + H2O = tetradecanoate + glycerol + H(+). The enzyme catalyses 2-hexadecanoylglycerol + H2O = glycerol + hexadecanoate + H(+). It carries out the reaction 2-(9Z-octadecenoyl)-glycerol + H2O = glycerol + (9Z)-octadecenoate + H(+). It catalyses the reaction 1-(9Z-octadecenoyl)-glycerol + H2O = glycerol + (9Z)-octadecenoate + H(+). The catalysed reaction is 2-(9Z,12Z-octadecadienoyl)-glycerol + H2O = (9Z,12Z)-octadecadienoate + glycerol + H(+). The enzyme catalyses 1-(5Z,8Z,11Z,14Z-eicosatetraenoyl)-glycerol + H2O = glycerol + (5Z,8Z,11Z,14Z)-eicosatetraenoate + H(+). It carries out the reaction 1-(9Z,12Z-octadecadienoyl)-glycerol + H2O = (9Z,12Z)-octadecadienoate + glycerol + H(+). It catalyses the reaction 3-(9Z-octadecenoyl)-sn-glycero-1-phospho-(3'-(9Z-octadecenoyl)-1'-sn-glycerol) + H2O = 3-(9Z-octadecenoyl)-sn-glycero-1-phospho-(1'-sn-glycerol) + (9Z)-octadecenoate + H(+). The catalysed reaction is (S,S)-2-(9Z-octadecenoyl)-sn-glycero-1-phospho-(2'-(9Z-octadecenoyl)-1'-sn-glycerol) + H2O = (S,S)-2-(9Z-octadecenoyl)-sn-glycero-1-phospho-(1'-sn-glycerol) + (9Z)-octadecenoate + H(+). The enzyme catalyses (R,R)-2-(9Z-octadecenoyl)-sn-glycero-3-phospho-(2'-(9Z-octadecenoyl)-3'-sn-glycerol) + H2O = (R,R)-2-(9Z-octadecenoyl)-sn-glycero-3-phospho-(3'-sn-glycerol) + (9Z)-octadecenoate + H(+). Its function is as follows. Lipase that preferentially hydrolysis medium-chain saturated monoacylglycerols including 2-arachidonoylglycerol. Through 2-arachidonoylglycerol degradation may regulate endocannabinoid signaling pathways. Also has a lysophosphatidyl lipase activity with a preference for lysophosphatidylglycerol among other lysophospholipids. Also able to degrade bis(monoacylglycero)phosphate (BMP) and constitutes the major enzyme for BMP catabolism. BMP, also known as lysobisphosphatidic acid, is enriched in late endosomes and lysosomes and plays a key role in the formation of intraluminal vesicles and in lipid sorting. This is Monoacylglycerol lipase ABHD6 from Mus musculus (Mouse).